Here is a 360-residue protein sequence, read N- to C-terminus: POU domain, class 5, transcription factor 1 (360 aa).

Disordered regions lie at residues 1-50 (MAGH…IGPG) and 87-118 (QGGL…CAAP). The 9aaTAD motif lies at 4 to 12 (HLASDFAFS). The span at 41–50 (PPGGSGIGPG) shows a compositional bias: gly residues. Residue S111 is modified to Phosphoserine; by MAPK. Residue K123 forms a Glycyl lysine isopeptide (Lys-Gly) (interchain with G-Cter in SUMO) linkage. The 75-residue stretch at 138 to 212 (DIKALQKDLE…LLQKWVEEAD (75 aa)) folds into the POU-specific domain. R157 and Q164 together coordinate DNA. DNA-binding stretches follow at residues 180–186 (SQTTICR) and 193–196 (SFKN). Residues 230–289 (RKRKRTSIENRVRGNLESMFLQCPKPTLQQISHIAQQLGLEKDVVRVWFCNRRQKGKRSS) constitute a DNA-binding region (homeobox). The residue at position 235 (T235) is a Phosphothreonine. Phosphoserine occurs at positions 236, 289, and 290. Positions 287–316 (RSSSDYSQREDFEAAGSPFPGGPVSFPLAP) are disordered. Residues 302-313 (GSPFPGGPVSFP) are compositionally biased toward low complexity. The residue at position 355 (S355) is a Phosphoserine.

This sequence belongs to the POU transcription factor family. Class-5 subfamily. In terms of assembly, interacts with PKM. Interacts with WWP2. Interacts with UBE2I and ZSCAN10. Interacts with PCGF1. Interacts with ESRRB; recruits ESRRB near the POU5F1-SOX2 element in the NANOG proximal promoter; the interaction is DNA independent. Interacts with ZNF322. Interacts with MAPK8 and MAPK9; the interaction allows MAPK8 and MAPK9 to phosphorylate POU5F1 on Ser-355. Interacts (when phosphorylated on Ser-355) with FBXW8. Interacts with FBXW4. Interacts with SOX2 and SOX15; binds synergistically with either SOX2 or SOX15 to DNA. Interacts with DDX56. Sumoylation enhances the protein stability, DNA binding and transactivation activity. Sumoylation is required for enhanced YES1 expression. Post-translationally, ubiquitinated; undergoes 'Lys-63'-linked polyubiquitination by WWP2 leading to proteasomal degradation. In terms of processing, ERK1/2-mediated phosphorylation at Ser-111 promotes nuclear exclusion and proteasomal degradation. Phosphorylation at Thr-235 and Ser-236 decrease DNA-binding and alters ability to activate transcription.

Its subcellular location is the cytoplasm. It localises to the nucleus. Functionally, transcription factor that binds to the octamer motif (5'-ATTTGCAT-3'). Forms a trimeric complex with SOX2 or SOX15 on DNA and controls the expression of a number of genes involved in embryonic development such as YES1, FGF4, UTF1 and ZFP206. Critical for early embryogenesis and for embryonic stem cell pluripotency. The sequence is that of POU domain, class 5, transcription factor 1 (POU5F1) from Sus scrofa (Pig).